Here is a 218-residue protein sequence, read N- to C-terminus: Glutathione S-transferase Mu 2 (218 aa).

Positions 2-88 (PMTLGYWNIR…YIARKHNLCG (87 aa)) constitute a GST N-terminal domain. Residue 7–8 (YW) participates in glutathione binding. Phosphoserine occurs at positions 27 and 44. Glutathione is bound by residues 43 to 46 (RSQW), Lys50, 59 to 60 (NL), and 72 to 73 (QS). Positions 90 to 208 (TEKEKIREDI…KSSRFLPRPV (119 aa)) constitute a GST C-terminal domain. Tyr116 lines the substrate pocket.

It belongs to the GST superfamily. Mu family. As to quaternary structure, homodimer.

It is found in the cytoplasm. The catalysed reaction is RX + glutathione = an S-substituted glutathione + a halide anion + H(+). The enzyme catalyses 11(S)-hydroxy-14(S),15(S)-epoxy-(5Z,8Z,12E)-eicosatrienoate + glutathione = (11S,15S)-dihydroxy-14(R)-S-glutathionyl-(5Z,8Z,12E)-eicosatrienoate. Functionally, conjugation of reduced glutathione to a wide number of exogenous and endogenous hydrophobic electrophiles. Participates in the formation of novel hepoxilin regioisomers. Has activity toward aflatoxin B(1)-8,9-epoxide (AFBO). In Macaca fascicularis (Crab-eating macaque), this protein is Glutathione S-transferase Mu 2 (GSTM2).